The sequence spans 418 residues: UDP-N-acetylglucosamine 1-carboxyvinyltransferase (418 aa).

Residue 23 to 24 participates in phosphoenolpyruvate binding; sequence KN. Residue Arg93 participates in UDP-N-acetyl-alpha-D-glucosamine binding. Asp117 functions as the Proton donor in the catalytic mechanism. Residues Asp305 and Val327 each coordinate UDP-N-acetyl-alpha-D-glucosamine.

Belongs to the EPSP synthase family. MurA subfamily.

Its subcellular location is the cytoplasm. It carries out the reaction phosphoenolpyruvate + UDP-N-acetyl-alpha-D-glucosamine = UDP-N-acetyl-3-O-(1-carboxyvinyl)-alpha-D-glucosamine + phosphate. It functions in the pathway cell wall biogenesis; peptidoglycan biosynthesis. Functionally, cell wall formation. Adds enolpyruvyl to UDP-N-acetylglucosamine. The sequence is that of UDP-N-acetylglucosamine 1-carboxyvinyltransferase from Mycobacterium leprae (strain TN).